Consider the following 693-residue polypeptide: Follicle-stimulating hormone receptor (693 aa).

The N-terminal stretch at 1–18 is a signal peptide; it reads MFLVFTCSLILLASCSSC. Intrachain disulfides connect C18/C25 and C23/C32. The LRRNT domain maps to 19-46; it reads QHHTCHCAGRIFICQESKVVQLPRDIPT. The Extracellular portion of the chain corresponds to 19 to 366; the sequence is QHHTCHCAGR…EDIMGYTILR (348 aa). An N-linked (GlcNAc...) asparagine glycan is attached at N47. LRR repeat units follow at residues 49 to 72, 73 to 97, 98 to 118, 119 to 143, 144 to 169, 170 to 192, 193 to 216, 217 to 240, and 241 to 259; these read TELRFVLTKMRVIPKGAFAGLLDL, EKIEISQNDALEVIEAKVFSNLPKL, HEIRIEKANNLVYIDQDAFQH, LPSLRYLLISNTGLRFLPVVQKVHS, FQKVLLDIQDNINIRTIERNSFMGLS, SESVILWLNKNGIQEIENHAFNG, TYLDELNLSDNQNLEKLPNEVFQG, ANGPVVLDISRTKISFLPGHGLEL, and IKKLRARSTYNLKKLPDLS. N-linked (GlcNAc...) asparagine glycosylation is found at N191 and N199. N268 is a glycosylation site (N-linked (GlcNAc...) asparagine). 4 cysteine pairs are disulfide-bonded: C275–C346, C276–C292, C276–C356, and C292–C338. Residues 367–387 form a helical membrane-spanning segment; sequence VLIWFISILAITGNIVVLIIL. The Cytoplasmic segment spans residues 388–398; the sequence is ISSQYKLTVPR. A helical transmembrane segment spans residues 399–421; the sequence is FLMCNLAFADLCIGIYLLFIASV. The Extracellular portion of the chain corresponds to 422-443; that stretch reads DIQTKSQYYNYAIDWQTGAGCN. A disulfide bridge links C442 with C517. A helical membrane pass occupies residues 444–465; sequence AAGFFTVFASELSVYTLTVITL. At 466–485 the chain is on the cytoplasmic side; the sequence is ERWHTITYAMQLDRKVRFRH. The chain crosses the membrane as a helical span at residues 486–508; that stretch reads AVIIMIFGWMFAFTVALLPIFGV. At 509–528 the chain is on the extracellular side; the sequence is SSYMKVSICLPMDIETPFSQ. The chain crosses the membrane as a helical span at residues 529–550; the sequence is AYVIFLLVLNVLAFVIICACYI. The Cytoplasmic segment spans residues 551 to 573; it reads CIYFTVRNPNVISSNSDTKIAKR. Residues 574–597 form a helical membrane-spanning segment; it reads MAILIFTDFLCMAPISFFAISASL. Topologically, residues 598-608 are extracellular; sequence KVPLITVSKSK. Residues 609–630 form a helical membrane-spanning segment; that stretch reads ILLVLFYPINSCANPFLYAIFT. Topologically, residues 631–693 are cytoplasmic; it reads KTFRRDFFIL…YSLVPLNHLN (63 aa).

Belongs to the G-protein coupled receptor 1 family. FSH/LSH/TSH subfamily. In terms of assembly, homotrimer. Functions as a homotrimer binding the FSH hormone heterodimer composed of CGA and FSHB.

It is found in the cell membrane. In terms of biological role, g protein-coupled receptor for follitropin, the follicle-stimulating hormone. Through cAMP production activates the downstream PI3K-AKT and ERK1/ERK2 signaling pathways. The protein is Follicle-stimulating hormone receptor (FSHR) of Cairina moschata (Muscovy duck).